The following is a 1033-amino-acid chain: Calcium-transporting ATPase 12, plasma membrane-type (1033 aa).

Met-1 bears the N-acetylmethionine mark. Topologically, residues 1–152 (MRDLKEYDYS…NTYHKPPPKG (152 aa)) are cytoplasmic. The interaction with calmodulin stretch occupies residues 25–36 (QRRWRFAYAAIY). The residue at position 37 (Ser-37) is a Phosphoserine. A helical transmembrane segment spans residues 153–173 (LLFFVYEAFKDLTILILLVCA). Residues 174–191 (IFSLGFGIKEHGIKEGWY) lie on the Lumenal side of the membrane. The helical transmembrane segment at 192–212 (EGGSIFVAVFLVIVVSALSNF) threads the bilayer. Residues 213 to 341 (RQERQFDKLS…SERTPLQVRL (129 aa)) lie on the Cytoplasmic side of the membrane. A helical transmembrane segment spans residues 342–361 (DTLTSTIGKIGLTVAALVLV). Over 362-397 (VLLVRYFTGNTEKEGKREYNGSKTPVDTVVNSVVRI) the chain is Lumenal. Residues 398–415 (VAAAVTIVVVAIPEGLPL) form a helical membrane-spanning segment. Residues 416–806 (AVTLTLAYSM…KWGRCVYNNI (391 aa)) lie on the Cytoplasmic side of the membrane. Asp-453 functions as the 4-aspartylphosphate intermediate in the catalytic mechanism. 2 residues coordinate Mg(2+): Asp-751 and Asp-755. A helical transmembrane segment spans residues 807 to 825 (QKFIQFQLTVNVAALVINF). The Lumenal portion of the chain corresponds to 826-836 (IAAISAGEVPL). Residues 837–857 (TAVQLLWVNLIMDTLGALALA) traverse the membrane as a helical segment. Topologically, residues 858 to 877 (TERPTNELLKRKPVGRTEAL) are cytoplasmic. The chain crosses the membrane as a helical span at residues 878–900 (ITNVMWRNLLVQSLYQIAVLLIL). Over 901–909 (QFKGMSIFS) the chain is Lumenal. A helical membrane pass occupies residues 910-930 (VRKEVKDTLIFNTFVLCQVFN). The Cytoplasmic segment spans residues 931 to 948 (EFNAREMEKKNVFKGLHR). A helical membrane pass occupies residues 949 to 970 (NRLFIGIIAITIVLQVIMVEFL). The Lumenal segment spans residues 971-980 (KKFADTVRLN). Residues 981–1002 (GWQWGTCIALASLSWPIGFFTK) traverse the membrane as a helical segment. Residues 1003-1006 (FIPV) are Cytoplasmic-facing.

This sequence belongs to the cation transport ATPase (P-type) (TC 3.A.3) family. Type IIB subfamily.

It localises to the membrane. It catalyses the reaction Ca(2+)(in) + ATP + H2O = Ca(2+)(out) + ADP + phosphate + H(+). Activated by calmodulin. Its function is as follows. This magnesium-dependent enzyme catalyzes the hydrolysis of ATP coupled with the translocation of calcium from the cytosol out of the cell or into organelles. The chain is Calcium-transporting ATPase 12, plasma membrane-type (ACA12) from Arabidopsis thaliana (Mouse-ear cress).